The chain runs to 338 residues: Phenylalanine--tRNA ligase alpha subunit (338 aa).

Glu252 is a Mg(2+) binding site.

The protein belongs to the class-II aminoacyl-tRNA synthetase family. Phe-tRNA synthetase alpha subunit type 1 subfamily. As to quaternary structure, tetramer of two alpha and two beta subunits. Requires Mg(2+) as cofactor.

It is found in the cytoplasm. It carries out the reaction tRNA(Phe) + L-phenylalanine + ATP = L-phenylalanyl-tRNA(Phe) + AMP + diphosphate + H(+). This Pseudomonas aeruginosa (strain ATCC 15692 / DSM 22644 / CIP 104116 / JCM 14847 / LMG 12228 / 1C / PRS 101 / PAO1) protein is Phenylalanine--tRNA ligase alpha subunit.